Reading from the N-terminus, the 881-residue chain is DNA mismatch repair protein MutS (881 aa).

632-639 (GPNMGGKS) serves as a coordination point for ATP.

This sequence belongs to the DNA mismatch repair MutS family.

In terms of biological role, this protein is involved in the repair of mismatches in DNA. It is possible that it carries out the mismatch recognition step. This protein has a weak ATPase activity. This Acinetobacter baylyi (strain ATCC 33305 / BD413 / ADP1) protein is DNA mismatch repair protein MutS.